Consider the following 154-residue polypeptide: 8-oxo-dGTP diphosphatase (154 aa).

A Nudix hydrolase domain is found at Met1 to Glu129. Mg(2+)-binding residues include Gly38, Glu53, Glu56, and Glu57. A Nudix box motif is present at residues Gly38–Gly59.

The protein belongs to the Nudix hydrolase family. As to quaternary structure, homotrimer. Mg(2+) is required as a cofactor.

It carries out the reaction 8-oxo-dGTP + H2O = 8-oxo-dGMP + diphosphate + H(+). In terms of biological role, involved in the DNA repair system to avoid A.T to G.C transversions. Degrades 8-oxo-dGTP to the monophosphate, but is also active on all of the nucleoside triphosphates. The sequence is that of 8-oxo-dGTP diphosphatase (mutX) from Streptococcus pneumoniae serotype 4 (strain ATCC BAA-334 / TIGR4).